The sequence spans 435 residues: IAA-amino acid hydrolase ILR1-like 5 (435 aa).

The first 25 residues, 1–25 (MSFCKLVSFVLILHLLNSCLISCSS), serve as a signal peptide directing secretion. Positions 134, 136, 170, 194, and 397 each coordinate Mn(2+). The short motif at 432 to 435 (KDEL) is the Prevents secretion from ER element.

The protein belongs to the peptidase M20 family.

It localises to the endoplasmic reticulum lumen. Hydrolyzes certain amino acid conjugates of the plant growth regulator indole-3-acetic acid (IAA). The sequence is that of IAA-amino acid hydrolase ILR1-like 5 from Arabidopsis thaliana (Mouse-ear cress).